The following is a 56-amino-acid chain: Small ribosomal subunit protein bS21 (56 aa).

The protein belongs to the bacterial ribosomal protein bS21 family.

The sequence is that of Small ribosomal subunit protein bS21 from Synechococcus sp. (strain RCC307).